A 140-amino-acid polypeptide reads, in one-letter code: Large ribosomal subunit protein uL11 (140 aa).

This sequence belongs to the universal ribosomal protein uL11 family. Part of the ribosomal stalk of the 50S ribosomal subunit. Interacts with L10 and the large rRNA to form the base of the stalk. L10 forms an elongated spine to which L12 dimers bind in a sequential fashion forming a multimeric L10(L12)X complex. Post-translationally, one or more lysine residues are methylated.

Forms part of the ribosomal stalk which helps the ribosome interact with GTP-bound translation factors. This is Large ribosomal subunit protein uL11 from Syntrophotalea carbinolica (strain DSM 2380 / NBRC 103641 / GraBd1) (Pelobacter carbinolicus).